Consider the following 355-residue polypeptide: Peptide chain release factor 1 (355 aa).

The residue at position 233 (Gln233) is an N5-methylglutamine.

Belongs to the prokaryotic/mitochondrial release factor family. Methylated by PrmC. Methylation increases the termination efficiency of RF1.

The protein localises to the cytoplasm. Functionally, peptide chain release factor 1 directs the termination of translation in response to the peptide chain termination codons UAG and UAA. The protein is Peptide chain release factor 1 of Dehalococcoides mccartyi (strain ATCC BAA-2100 / JCM 16839 / KCTC 5957 / BAV1).